The sequence spans 140 residues: Large ribosomal subunit protein bL17 (140 aa).

Belongs to the bacterial ribosomal protein bL17 family. As to quaternary structure, part of the 50S ribosomal subunit. Contacts protein L32.

The polypeptide is Large ribosomal subunit protein bL17 (Paracoccus denitrificans (strain Pd 1222)).